A 171-amino-acid chain; its full sequence is Peptide deformylase (171 aa).

Fe cation is bound by residues cysteine 91 and histidine 133. Glutamate 134 is an active-site residue. Residue histidine 137 participates in Fe cation binding.

The protein belongs to the polypeptide deformylase family. The cofactor is Fe(2+).

The enzyme catalyses N-terminal N-formyl-L-methionyl-[peptide] + H2O = N-terminal L-methionyl-[peptide] + formate. Functionally, removes the formyl group from the N-terminal Met of newly synthesized proteins. Requires at least a dipeptide for an efficient rate of reaction. N-terminal L-methionine is a prerequisite for activity but the enzyme has broad specificity at other positions. The chain is Peptide deformylase from Sodalis glossinidius (strain morsitans).